We begin with the raw amino-acid sequence, 851 residues long: Pentatricopeptide repeat-containing protein At3g54980, mitochondrial (851 aa).

Residues methionine 1–cysteine 26 constitute a mitochondrion transit peptide. PPR repeat units lie at residues asparagine 162–proline 196, phenylalanine 197–glycine 231, aspartate 232–proline 266, aspartate 267–valine 301, serine 303–methionine 337, asparagine 338–proline 372, asparagine 373–proline 407, serine 408–threonine 438, asparagine 442–proline 476, asparagine 477–proline 511, asparagine 512–valine 546, asparagine 547–glutamate 577, serine 583–proline 617, asparagine 618–leucine 652, aspartate 653–proline 687, serine 688–cysteine 722, aspartate 723–proline 757, aspartate 758–proline 792, and asparagine 793–proline 827.

It belongs to the PPR family. P subfamily.

The protein localises to the mitochondrion. The protein is Pentatricopeptide repeat-containing protein At3g54980, mitochondrial of Arabidopsis thaliana (Mouse-ear cress).